The primary structure comprises 320 residues: tRNA N6-adenosine threonylcarbamoyltransferase (320 aa).

Positions 113 and 117 each coordinate Fe cation. Substrate-binding positions include 143-147, aspartate 176, glycine 189, aspartate 193, and asparagine 281; that span reads VVSGG. Aspartate 305 is a binding site for Fe cation.

This sequence belongs to the KAE1 / TsaD family. Requires Fe(2+) as cofactor.

The protein resides in the cytoplasm. It catalyses the reaction L-threonylcarbamoyladenylate + adenosine(37) in tRNA = N(6)-L-threonylcarbamoyladenosine(37) in tRNA + AMP + H(+). In terms of biological role, required for the formation of a threonylcarbamoyl group on adenosine at position 37 (t(6)A37) in tRNAs that read codons beginning with adenine. Is involved in the transfer of the threonylcarbamoyl moiety of threonylcarbamoyl-AMP (TC-AMP) to the N6 group of A37, together with TsaE and TsaB. TsaD likely plays a direct catalytic role in this reaction. The polypeptide is tRNA N6-adenosine threonylcarbamoyltransferase (Mycoplasmoides gallisepticum (strain R(low / passage 15 / clone 2)) (Mycoplasma gallisepticum)).